Consider the following 142-residue polypeptide: MTTIDTISDVITRIRNANILKLDRVELINTKVAIGICHILKDRGFINSFGEFLNSSDRMSNRRFIQKYIIVNLKYKGERRSPCIKELRRISKPGRRVYVGYKNLHKTKGGIELFVLSTSKGLITDYTAREKGIGGELLFSIC.

This sequence belongs to the universal ribosomal protein uS8 family. In terms of assembly, part of the 30S ribosomal subunit.

It is found in the plastid. In terms of biological role, one of the primary rRNA binding proteins, it binds directly to 16S rRNA central domain where it helps coordinate assembly of the platform of the 30S subunit. This is Small ribosomal subunit protein uS8c (rps8) from Euglena longa (Euglenophycean alga).